The sequence spans 352 residues: Ion-translocating oxidoreductase complex subunit D (352 aa).

Transmembrane regions (helical) follow at residues isoleucine 20–glycine 40, glycine 42–leucine 62, isoleucine 89–alanine 109, and proline 123–leucine 143. Residue threonine 187 is modified to FMN phosphoryl threonine. The next 5 helical transmembrane spans lie at isoleucine 214 to leucine 234, tryptophan 242 to phenylalanine 262, leucine 267 to leucine 287, leucine 301 to proline 321, and aspartate 322 to threonine 342.

This sequence belongs to the NqrB/RnfD family. The complex is composed of six subunits: RsxA, RsxB, RsxC, RsxD, RsxE and RsxG. FMN serves as cofactor.

It is found in the cell inner membrane. Its function is as follows. Part of a membrane-bound complex that couples electron transfer with translocation of ions across the membrane. Required to maintain the reduced state of SoxR. This is Ion-translocating oxidoreductase complex subunit D from Shigella boydii serotype 18 (strain CDC 3083-94 / BS512).